Reading from the N-terminus, the 124-residue chain is 5-hydroxyisourate hydrolase (124 aa).

3 residues coordinate substrate: His15, Arg53, and Tyr121.

This sequence belongs to the transthyretin family. 5-hydroxyisourate hydrolase subfamily. As to quaternary structure, homotetramer.

It catalyses the reaction 5-hydroxyisourate + H2O = 5-hydroxy-2-oxo-4-ureido-2,5-dihydro-1H-imidazole-5-carboxylate + H(+). In terms of biological role, catalyzes the hydrolysis of 5-hydroxyisourate (HIU) to 2-oxo-4-hydroxy-4-carboxy-5-ureidoimidazoline (OHCU). The protein is 5-hydroxyisourate hydrolase of Mesorhizobium japonicum (strain LMG 29417 / CECT 9101 / MAFF 303099) (Mesorhizobium loti (strain MAFF 303099)).